The following is a 154-amino-acid chain: Myoglobin (154 aa).

One can recognise a Globin domain in the interval 2–148 (GLSDGEWQLV…FRNDMAAQYK (147 aa)). Position 4 is a phosphoserine (Ser4). His65 is a binding site for nitrite. An O2-binding site is contributed by His65. Residue Thr68 is modified to Phosphothreonine. A heme b-binding site is contributed by His94.

As to quaternary structure, monomer.

The protein resides in the cytoplasm. It localises to the sarcoplasm. It catalyses the reaction Fe(III)-heme b-[protein] + nitric oxide + H2O = Fe(II)-heme b-[protein] + nitrite + 2 H(+). The catalysed reaction is H2O2 + AH2 = A + 2 H2O. Functionally, monomeric heme protein which primary function is to store oxygen and facilitate its diffusion within muscle tissues. Reversibly binds oxygen through a pentacoordinated heme iron and enables its timely and efficient release as needed during periods of heightened demand. Depending on the oxidative conditions of tissues and cells, and in addition to its ability to bind oxygen, it also has a nitrite reductase activity whereby it regulates the production of bioactive nitric oxide. Under stress conditions, like hypoxia and anoxia, it also protects cells against reactive oxygen species thanks to its pseudoperoxidase activity. This is Myoglobin from Rangifer tarandus (Reindeer).